Here is a 75-residue protein sequence, read N- to C-terminus: MARITVEDCQERVDNRFLLVQMAIKRVHQYREGYEALVDSRNKEVVTALREIAAGKVLPDEEARYVETEEDFRAE.

Belongs to the RNA polymerase subunit omega family. In terms of assembly, the RNAP catalytic core consists of 2 alpha, 1 beta, 1 beta' and 1 omega subunit. When a sigma factor is associated with the core the holoenzyme is formed, which can initiate transcription.

It carries out the reaction RNA(n) + a ribonucleoside 5'-triphosphate = RNA(n+1) + diphosphate. Functionally, promotes RNA polymerase assembly. Latches the N- and C-terminal regions of the beta' subunit thereby facilitating its interaction with the beta and alpha subunits. The chain is DNA-directed RNA polymerase subunit omega from Nitratidesulfovibrio vulgaris (strain DSM 19637 / Miyazaki F) (Desulfovibrio vulgaris).